The chain runs to 165 residues: Alanine- and arginine-rich domain-containing protein (165 aa).

Residues 136–165 are disordered; sequence QQLKKRQDQERASKPQSPQDEEMNPECGNA.

The chain is Alanine- and arginine-rich domain-containing protein (Aard) from Rattus norvegicus (Rat).